The chain runs to 435 residues: CUB and peptidase domain-containing protein 1 (435 aa).

The signal sequence occupies residues 1 to 16 (SGFHLSFSFFRRAVCG). Residues 25–261 (IVGGTVAPIN…LKSWITGKIS (237 aa)) enclose the Peptidase S1 domain. C50 and C66 are joined by a disulfide. Catalysis depends on charge relay system residues H65 and D116. 4 disulfide bridges follow: C151–C218, C182–C197, C208–C237, and C322–C341. S212 (charge relay system) is an active-site residue. One can recognise a CUB domain in the interval 256–378 (ITGKISRSPA…SGFHLSFSFF (123 aa)).

Belongs to the peptidase S1 family. In terms of tissue distribution, component of the acid-insoluble organic matrix of the aragonitic skeleton (at protein level).

It is found in the secreted. The protein is CUB and peptidase domain-containing protein 1 of Acropora millepora (Staghorn coral).